A 335-amino-acid polypeptide reads, in one-letter code: 5-formaminoimidazole-4-carboxamide-1-(beta)-D-ribofuranosyl 5'-monophosphate synthetase (335 aa).

Positions 21 and 86 each coordinate 5-amino-1-(5-phospho-beta-D-ribosyl)imidazole-4-carboxamide. One can recognise an ATP-grasp domain in the interval 107-315 (RELLRWEADQ…YFDKPMDMGE (209 aa)). ATP contacts are provided by residues 137 to 189 (PTEV…VPAY) and Glu-211. Asn-231 is a 5-amino-1-(5-phospho-beta-D-ribosyl)imidazole-4-carboxamide binding site. Positions 270 and 283 each coordinate Mg(2+).

It belongs to the phosphohexose mutase family. Mg(2+) is required as a cofactor. The cofactor is Mn(2+).

The catalysed reaction is 5-amino-1-(5-phospho-beta-D-ribosyl)imidazole-4-carboxamide + formate + ATP = 5-formamido-1-(5-phospho-D-ribosyl)imidazole-4-carboxamide + ADP + phosphate. Its pathway is purine metabolism; IMP biosynthesis via de novo pathway; 5-formamido-1-(5-phospho-D-ribosyl)imidazole-4-carboxamide from 5-amino-1-(5-phospho-D-ribosyl)imidazole-4-carboxamide (formate route): step 1/1. Catalyzes the ATP- and formate-dependent formylation of 5-aminoimidazole-4-carboxamide-1-beta-d-ribofuranosyl 5'-monophosphate (AICAR) to 5-formaminoimidazole-4-carboxamide-1-beta-d-ribofuranosyl 5'-monophosphate (FAICAR) in the absence of folates. The sequence is that of 5-formaminoimidazole-4-carboxamide-1-(beta)-D-ribofuranosyl 5'-monophosphate synthetase from Pyrobaculum arsenaticum (strain DSM 13514 / JCM 11321 / PZ6).